We begin with the raw amino-acid sequence, 309 residues long: Probable pyridoxal 5'-phosphate synthase subunit PDX1 (309 aa).

D40 contacts D-ribose 5-phosphate. Residue K97 is the Schiff-base intermediate with D-ribose 5-phosphate of the active site. G169 is a binding site for D-ribose 5-phosphate. R181 is a D-glyceraldehyde 3-phosphate binding site. Residues G230 and 251 to 252 (GS) each bind D-ribose 5-phosphate.

It belongs to the PdxS/SNZ family.

The enzyme catalyses aldehydo-D-ribose 5-phosphate + D-glyceraldehyde 3-phosphate + L-glutamine = pyridoxal 5'-phosphate + L-glutamate + phosphate + 3 H2O + H(+). It functions in the pathway cofactor biosynthesis; pyridoxal 5'-phosphate biosynthesis. Functionally, catalyzes the formation of pyridoxal 5'-phosphate from ribose 5-phosphate (RBP), glyceraldehyde 3-phosphate (G3P) and ammonia. The ammonia is provided by PDX2. Can also use ribulose 5-phosphate and dihydroxyacetone phosphate as substrates, resulting from enzyme-catalyzed isomerization of RBP and G3P, respectively. Also plays an indirect role in resistance to singlet oxygen-generating photosensitizers. In Hevea brasiliensis (Para rubber tree), this protein is Probable pyridoxal 5'-phosphate synthase subunit PDX1 (PDX1).